Consider the following 83-residue polypeptide: Disintegrin isoform D-3 (83 aa).

Residues 2–83 (PPVCGNELLE…GKSSDCPWNH (82 aa)) form the Disintegrin domain. 7 disulfides stabilise this stretch: Cys5–Cys24, Cys16–Cys34, Cys18–Cys29, Cys28–Cys51, Cys42–Cys48, Cys47–Cys72, and Cys60–Cys79. Residues 64–66 (RGD) carry the Cell attachment site motif.

The protein belongs to the venom metalloproteinase (M12B) family. P-II subfamily. P-IIa sub-subfamily. As to quaternary structure, monomer (disintegrin). Expressed by the venom gland.

It localises to the secreted. Inhibits fibrinogen interaction with platelets. Acts by binding to alpha-IIb/beta-3 (ITGA2B/ITGB3) on the platelet surface and inhibits aggregation induced by ADP, thrombin, platelet-activating factor and collagen. The protein is Disintegrin isoform D-3 of Bitis arietans (African puff adder).